A 338-amino-acid polypeptide reads, in one-letter code: MTRF1L release factor glutamine methyltransferase (338 aa).

S-adenosyl-L-methionine is bound by residues 167–171 (GCGSG), Asp190, Trp225, and Asn239. A substrate-binding site is contributed by 239–242 (NPPY).

It belongs to the protein N5-glutamine methyltransferase family.

The protein localises to the mitochondrion. The catalysed reaction is L-glutaminyl-[peptide chain release factor] + S-adenosyl-L-methionine = N(5)-methyl-L-glutaminyl-[peptide chain release factor] + S-adenosyl-L-homocysteine + H(+). N5-glutamine methyltransferase responsible for the methylation of the glutamine residue in the universally conserved GGQ motif of the mitochondrial translation release factors MTRF1, MTRF1L, MRPL58/ICT1 and MTRFR. This is MTRF1L release factor glutamine methyltransferase (HEMK1) from Homo sapiens (Human).